Reading from the N-terminus, the 348-residue chain is Dihydroorotase (348 aa).

Residues His17 and His19 each contribute to the Zn(2+) site. Residues His19 to Arg21 and Asn45 each bind substrate. Zn(2+) is bound by residues Lys103, His140, and His178. Lys103 bears the N6-carboxylysine mark. His140 serves as a coordination point for substrate. Substrate is bound at residue Leu223. Asp251 contacts Zn(2+). Asp251 is a catalytic residue. His255 and Ala267 together coordinate substrate.

Belongs to the metallo-dependent hydrolases superfamily. DHOase family. Class II DHOase subfamily. As to quaternary structure, homodimer. Zn(2+) is required as a cofactor.

The enzyme catalyses (S)-dihydroorotate + H2O = N-carbamoyl-L-aspartate + H(+). It participates in pyrimidine metabolism; UMP biosynthesis via de novo pathway; (S)-dihydroorotate from bicarbonate: step 3/3. Its function is as follows. Catalyzes the reversible cyclization of carbamoyl aspartate to dihydroorotate. The sequence is that of Dihydroorotase from Salmonella typhi.